A 164-amino-acid polypeptide reads, in one-letter code: SsrA-binding protein (164 aa).

Residues 141-164 form a disordered region; that stretch reads KLHDKRQDEKQKSIKKEINSALKR. The span at 145 to 158 shows a compositional bias: basic and acidic residues; it reads KRQDEKQKSIKKEI.

It belongs to the SmpB family.

The protein localises to the cytoplasm. Functionally, required for rescue of stalled ribosomes mediated by trans-translation. Binds to transfer-messenger RNA (tmRNA), required for stable association of tmRNA with ribosomes. tmRNA and SmpB together mimic tRNA shape, replacing the anticodon stem-loop with SmpB. tmRNA is encoded by the ssrA gene; the 2 termini fold to resemble tRNA(Ala) and it encodes a 'tag peptide', a short internal open reading frame. During trans-translation Ala-aminoacylated tmRNA acts like a tRNA, entering the A-site of stalled ribosomes, displacing the stalled mRNA. The ribosome then switches to translate the ORF on the tmRNA; the nascent peptide is terminated with the 'tag peptide' encoded by the tmRNA and targeted for degradation. The ribosome is freed to recommence translation, which seems to be the essential function of trans-translation. This chain is SsrA-binding protein, found in Prochlorococcus marinus (strain AS9601).